A 601-amino-acid polypeptide reads, in one-letter code: Elongation factor 4 (601 aa).

The tr-type G domain maps to Ser-7–Lys-189. Residues Asp-19–Thr-24 and Asn-136–Asp-139 contribute to the GTP site.

Belongs to the TRAFAC class translation factor GTPase superfamily. Classic translation factor GTPase family. LepA subfamily.

It is found in the cell inner membrane. The enzyme catalyses GTP + H2O = GDP + phosphate + H(+). Its function is as follows. Required for accurate and efficient protein synthesis under certain stress conditions. May act as a fidelity factor of the translation reaction, by catalyzing a one-codon backward translocation of tRNAs on improperly translocated ribosomes. Back-translocation proceeds from a post-translocation (POST) complex to a pre-translocation (PRE) complex, thus giving elongation factor G a second chance to translocate the tRNAs correctly. Binds to ribosomes in a GTP-dependent manner. The polypeptide is Elongation factor 4 (Afipia carboxidovorans (strain ATCC 49405 / DSM 1227 / KCTC 32145 / OM5) (Oligotropha carboxidovorans)).